We begin with the raw amino-acid sequence, 840 residues long: OTU domain-containing protein 7B (840 aa).

Positions 49-88 are disordered; that stretch reads AGNLSPPFSGGSTCPKTPEKGGSDREPTRPSRPILQRQDD. The span at 65–77 shows a compositional bias: basic and acidic residues; it reads TPEKGGSDREPTR. The residue at position 100 (S100) is a Phosphoserine. Residues 152 to 401 are TRAF-binding; that stretch reads ERDLIEQSML…AVDPGKGWEW (250 aa). The interval 167-440 is catalytic; that stretch reads AGRLNWWVSM…VKWIPLSSDS (274 aa). The region spanning 183–365 is the OTU domain; that stretch reads LLPLATTGDG…QAHFSALVSM (183 aa). Residues 187-193 form a regulatory loop region; sequence ATTGDGN. The active site involves D191. The active-site Nucleophile is C194. Residue H358 is the Proton acceptor of the active site. A compositionally biased stretch (polar residues) spans 440 to 452; the sequence is SQAPLAQPESPTA. 2 disordered regions span residues 440–592 and 653–710; these read SQAP…YSQE and IMNG…VHCQ. Basic and acidic residues-rich tracts occupy residues 456-471 and 488-500; these read DEPR…DKES and SKRD…KRAD. Residues S464, S467, and S471 each carry the phosphoserine modification. The Nuclear localization signal signature appears at 483 to 498; sequence RRKEKSKRDREKDKKR. Gly residues predominate over residues 531-541; the sequence is KPGGLGSGSGI. The residue at position 730 (T730) is a Phosphothreonine. The A20-type zinc finger occupies 793–828; the sequence is PPTQTKCKQPNCSFYGHPETNNLCSCCYREELRRRE. C799, C804, C816, and C819 together coordinate Zn(2+).

This sequence belongs to the peptidase C64 family. As to quaternary structure, interacts with TRAF6. Interacts with PARK7, leading to inhibit deubiquitinase activity. Interacts with EGFR, ITCH and NEDD4. Interacts with TRAF3. Interacts with ZAP70 in activated T cells, but not in resting T cells. Phosphorylated by EGFR.

It localises to the cytoplasm. The protein resides in the nucleus. It catalyses the reaction Thiol-dependent hydrolysis of ester, thioester, amide, peptide and isopeptide bonds formed by the C-terminal Gly of ubiquitin (a 76-residue protein attached to proteins as an intracellular targeting signal).. With respect to regulation, deubiquitinase activity is inhibited following interaction with PARK7. Its function is as follows. Negative regulator of the non-canonical NF-kappa-B pathway that acts by mediating deubiquitination of TRAF3, an inhibitor of the NF-kappa-B pathway, thereby acting as a negative regulator of B-cell responses. In response to non-canonical NF-kappa-B stimuli, deubiquitinates 'Lys-48'-linked polyubiquitin chains of TRAF3, preventing TRAF3 proteolysis and over-activation of non-canonical NF-kappa-B. Negatively regulates mucosal immunity against infections. Deubiquitinates ZAP70, and thereby regulates T cell receptor (TCR) signaling that leads to the activation of NF-kappa-B. Plays a role in T cell homeostasis and is required for normal T cell responses, including production of IFNG and IL2. Mediates deubiquitination of EGFR. Has deubiquitinating activity toward 'Lys-11', 'Lys-48' and 'Lys-63'-linked polyubiquitin chains. Has a much higher catalytic rate with 'Lys-11'-linked polyubiquitin chains (in vitro); however the physiological significance of these data are unsure. Hydrolyzes both linear and branched forms of polyubiquitin. Acts as a regulator of mTORC1 and mTORC2 assembly by mediating 'Lys-63'-linked deubiquitination of MLST8, thereby promoting assembly of the mTORC2 complex, while inibiting formation of the mTORC1 complex. This chain is OTU domain-containing protein 7B (Otud7b), found in Mus musculus (Mouse).